A 373-amino-acid chain; its full sequence is 2-phosphonomethylmalate synthase (373 aa).

The Pyruvate carboxyltransferase domain occupies 5 to 256 (LVLEDTTLRD…DLGIDLTKLK (252 aa)).

Belongs to the alpha-IPM synthase/homocitrate synthase family.

The enzyme catalyses 3-phosphonopyruvate + acetyl-CoA + H2O = (R)-2-(phosphonomethyl)malate + CoA + H(+). It participates in antibiotic biosynthesis. In terms of biological role, acyltransferase involved in the biosynthesis of the phosphonate antibiotic FR-900098, a potent antimalarial agent that acts as an inhibitor of 1-deoxy-D-xylulose 5-phosphate reductoisomerase (DXR), the first enzyme in the nonmevalonate pathway for isoprenoid biosynthesis. Catalyzes the condensation between acetyl-CoA and phosphonopyruvate to yield (R)-2-(phosphonomethyl)malate. The chain is 2-phosphonomethylmalate synthase from Streptomyces rubellomurinus (strain ATCC 31215).